The sequence spans 387 residues: Patatin group D-2 (387 aa).

Positions 1 to 23 (MATTKSFLILIVMILATTSSTFA) are cleaved as a signal peptide. A PNPLA domain is found at 32-230 (LSIDGGGIKG…TVADPALLSI (199 aa)). The GXGXXG signature appears at 36-41 (GGGIKG). Residues 75–79 (GTSTG) carry the GXSXG motif. Ser-77 serves as the catalytic Nucleophile. The N-linked (GlcNAc...) asparagine glycan is linked to Asn-115. Asp-216 functions as the Proton acceptor in the catalytic mechanism. Positions 216 to 218 (DGA) match the DGA/G motif. Residues 361–385 (ETYEEALKRFAKLLSDRKKLRANKA) are a coiled coil.

It belongs to the patatin family. Tuber.

It localises to the vacuole. Functionally, probable lipolytic acyl hydrolase (LAH), an activity which is thought to be involved in the response of tubers to pathogens. In Solanum tuberosum (Potato), this protein is Patatin group D-2.